The sequence spans 362 residues: MVLMAPRTLLLLLSGALALTQTWARSHSMRYFYTTMSRPGAGEPRFISVGYVDDTQFVRFDSDDASPREEPRAPWMEREGPKYWDRNTQICKAQAQTERENLRIALRYYNQSEGGSHTMQVMYGCDVGPDGPFLRGYEQHAYDGKDYIALNEDLRSWTAADMAAQITKRKWEAARRAEQRRVYLEGEFVEWLRRYLENGKETLQRADPPKTHMTHHPISDHEATLRCWALGFYPAEITLTWQRDGEDQTQDTELVETRPAGDGTFQKWAAVVVPSGEEQRYTCHVQHEGLPEPLTLRWEPSSQPTVPIVGIVAGLVLLVAVVTGAVVAAVMWRKKSSDRKGGSYSQAASSNSAQGSDVSLTA.

The N-terminal stretch at 1 to 24 (MVLMAPRTLLLLLSGALALTQTWA) is a signal peptide. Residues 25 to 114 (RSHSMRYFYT…ALRYYNQSEG (90 aa)) are alpha-1. The Extracellular segment spans residues 25–308 (RSHSMRYFYT…EPSSQPTVPI (284 aa)). A glycan (N-linked (GlcNAc...) asparagine) is linked at Asn110. Positions 115-206 (GSHTMQVMYG…ENGKETLQRA (92 aa)) are alpha-2. Positions 207 to 298 (DPPKTHMTHH…GLPEPLTLRW (92 aa)) are alpha-3. Positions 209-297 (PKTHMTHHPI…EGLPEPLTLR (89 aa)) constitute an Ig-like C1-type domain. A disulfide bond links Cys227 and Cys283. Residues 299–308 (EPSSQPTVPI) are connecting peptide. Residues 309–332 (VGIVAGLVLLVAVVTGAVVAAVMW) traverse the membrane as a helical segment. At 333-362 (RKKSSDRKGGSYSQAASSNSAQGSDVSLTA) the chain is on the cytoplasmic side. The disordered stretch occupies residues 337-362 (SDRKGGSYSQAASSNSAQGSDVSLTA). Residues 342-356 (GSYSQAASSNSAQGS) are compositionally biased toward low complexity.

This sequence belongs to the MHC class I family. Heterodimer of an alpha chain and a beta chain (beta-2-microglobulin).

The protein resides in the cell membrane. Its function is as follows. Involved in the presentation of foreign antigens to the immune system. The sequence is that of Putative HLA class I histocompatibility antigen, alpha chain H (HLA-H) from Homo sapiens (Human).